Here is a 256-residue protein sequence, read N- to C-terminus: MNKLLIIDGMNLVRRIHAAQPNESDITGLKERVHGACRKLLKYHIPTHAAIVWDGDAISWRKTLFPDYKKGRKPMPEALANGLNDIKAYLAEHHIHSVDADSEADDVIATLATKLVNIDGEAIIVSTDKGFSQLNHPKIKLWDHFNQTYLTIEEMEKKLGIERSQLIDYLALAGDSGNKIPGVPGIGPKSAVELLRIYRSLASIYNSIDKVGAKQAKKLEAGKQMARLSYKLVQLKTDMPLSVNLKQFRIKKPDSE.

D105 lines the Mg(2+) pocket. Residues 163-256 (RSQLIDYLAL…QFRIKKPDSE (94 aa)) form the 5'-3' exonuclease domain. Positions 172, 173, 181, 183, and 186 each coordinate K(+). An interaction with DNA region spans residues 185 to 190 (GIGPKS).

It belongs to the Xni family. It depends on Mg(2+) as a cofactor. K(+) is required as a cofactor.

Its function is as follows. Has flap endonuclease activity. During DNA replication, flap endonucleases cleave the 5'-overhanging flap structure that is generated by displacement synthesis when DNA polymerase encounters the 5'-end of a downstream Okazaki fragment. The sequence is that of Flap endonuclease Xni from Shewanella pealeana (strain ATCC 700345 / ANG-SQ1).